A 207-amino-acid chain; its full sequence is Large ribosomal subunit protein uL4 (207 aa).

The protein belongs to the universal ribosomal protein uL4 family. In terms of assembly, part of the 50S ribosomal subunit.

Its function is as follows. One of the primary rRNA binding proteins, this protein initially binds near the 5'-end of the 23S rRNA. It is important during the early stages of 50S assembly. It makes multiple contacts with different domains of the 23S rRNA in the assembled 50S subunit and ribosome. Functionally, forms part of the polypeptide exit tunnel. The sequence is that of Large ribosomal subunit protein uL4 from Rickettsia peacockii (strain Rustic).